Reading from the N-terminus, the 182-residue chain is ATP synthase subunit b (182 aa).

The helical transmembrane segment at 25-45 (VVLAGFAVLFYIVVKFVVPMF) threads the bilayer.

This sequence belongs to the ATPase B chain family. As to quaternary structure, F-type ATPases have 2 components, F(1) - the catalytic core - and F(0) - the membrane proton channel. F(1) has five subunits: alpha(3), beta(3), gamma(1), delta(1), epsilon(1). F(0) has three main subunits: a(1), b(2) and c(10-14). The alpha and beta chains form an alternating ring which encloses part of the gamma chain. F(1) is attached to F(0) by a central stalk formed by the gamma and epsilon chains, while a peripheral stalk is formed by the delta and b chains.

It is found in the cell membrane. F(1)F(0) ATP synthase produces ATP from ADP in the presence of a proton or sodium gradient. F-type ATPases consist of two structural domains, F(1) containing the extramembraneous catalytic core and F(0) containing the membrane proton channel, linked together by a central stalk and a peripheral stalk. During catalysis, ATP synthesis in the catalytic domain of F(1) is coupled via a rotary mechanism of the central stalk subunits to proton translocation. Functionally, component of the F(0) channel, it forms part of the peripheral stalk, linking F(1) to F(0). The polypeptide is ATP synthase subunit b (Arthrobacter sp. (strain FB24)).